A 120-amino-acid polypeptide reads, in one-letter code: MFVLSGYEYLLGFFIICSLVPALALSASKLLRPSGYAPERRTTYESGMEPIGGAWIQFNIRYYMFALVFVVFDVETVFLYPWAVAFHRLGLLAFIEALVFIAILVVALVYAWRKGALEWS.

3 helical membrane-spanning segments follow: residues 1 to 21 (MFVL…SLVP), 64 to 84 (MFAL…PWAV), and 89 to 109 (LGLL…VALV).

The protein belongs to the complex I subunit 3 family. NDH-1 can be composed of about 15 different subunits; different subcomplexes with different compositions have been identified which probably have different functions.

It localises to the cellular thylakoid membrane. It carries out the reaction a plastoquinone + NADH + (n+1) H(+)(in) = a plastoquinol + NAD(+) + n H(+)(out). The catalysed reaction is a plastoquinone + NADPH + (n+1) H(+)(in) = a plastoquinol + NADP(+) + n H(+)(out). Functionally, NDH-1 shuttles electrons from an unknown electron donor, via FMN and iron-sulfur (Fe-S) centers, to quinones in the respiratory and/or the photosynthetic chain. The immediate electron acceptor for the enzyme in this species is believed to be plastoquinone. Couples the redox reaction to proton translocation, and thus conserves the redox energy in a proton gradient. Cyanobacterial NDH-1 also plays a role in inorganic carbon-concentration. In Nostoc punctiforme (strain ATCC 29133 / PCC 73102), this protein is NAD(P)H-quinone oxidoreductase subunit 3.